A 236-amino-acid chain; its full sequence is Aspartate/glutamate leucyltransferase (236 aa).

Belongs to the R-transferase family. Bpt subfamily.

The protein resides in the cytoplasm. The catalysed reaction is N-terminal L-glutamyl-[protein] + L-leucyl-tRNA(Leu) = N-terminal L-leucyl-L-glutamyl-[protein] + tRNA(Leu) + H(+). It catalyses the reaction N-terminal L-aspartyl-[protein] + L-leucyl-tRNA(Leu) = N-terminal L-leucyl-L-aspartyl-[protein] + tRNA(Leu) + H(+). In terms of biological role, functions in the N-end rule pathway of protein degradation where it conjugates Leu from its aminoacyl-tRNA to the N-termini of proteins containing an N-terminal aspartate or glutamate. This Saccharophagus degradans (strain 2-40 / ATCC 43961 / DSM 17024) protein is Aspartate/glutamate leucyltransferase.